The chain runs to 263 residues: MPVFALLALVAYSVSLALIVPGLLQKNGGWRRMAIISAVIALVCHAIALEARILPDGDSGQNLSLLNVGSLVSLMICTVMTIVASRNRGWLLLPIVYAFALINLALATFMPNEYITHLEATPGMLVHIGLSLFSYATLIIAALYALQLAWIDYQLKNKKLAFNQEMPPLMSIERKMFHITQIGVVLLTLTLCTGLFYMHNLFSMENIDKAVLSIVAWFVYIVLLWGHYHEGWRGRRVVWFNVAGAVILTLAYFGSRIVQQLIS.

Topologically, residues 1–3 (MPV) are periplasmic. A helical membrane pass occupies residues 4–23 (FALLALVAYSVSLALIVPGL). Residues 24-34 (LQKNGGWRRMA) lie on the Cytoplasmic side of the membrane. A helical membrane pass occupies residues 35–54 (IISAVIALVCHAIALEARIL). At 55-63 (PDGDSGQNL) the chain is on the periplasmic side. A helical transmembrane segment spans residues 64-83 (SLLNVGSLVSLMICTVMTIV). Residues 84-89 (ASRNRG) are Cytoplasmic-facing. The chain crosses the membrane as a helical span at residues 90–109 (WLLLPIVYAFALINLALATF). Residues 110–123 (MPNEYITHLEATPG) lie on the Periplasmic side of the membrane. Residues 124 to 146 (MLVHIGLSLFSYATLIIAALYAL) traverse the membrane as a helical segment. At 147–181 (QLAWIDYQLKNKKLAFNQEMPPLMSIERKMFHITQ) the chain is on the cytoplasmic side. Residues 182 to 201 (IGVVLLTLTLCTGLFYMHNL) traverse the membrane as a helical segment. The Periplasmic segment spans residues 202-210 (FSMENIDKA). The chain crosses the membrane as a helical span at residues 211 to 228 (VLSIVAWFVYIVLLWGHY). At 229–236 (HEGWRGRR) the chain is on the cytoplasmic side. A helical membrane pass occupies residues 237–259 (VVWFNVAGAVILTLAYFGSRIVQ). The Periplasmic segment spans residues 260–263 (QLIS).

The protein resides in the cell inner membrane. The protein is Inner membrane protein YpjD (ypjD) of Escherichia coli O157:H7.